The chain runs to 89 residues: Calsenilin isoform 4 (89 aa).

Residues 27–57 (SSRDAEDQGSREGIGWQPPGRSWAHTTEQEG) are disordered.

As to expression, isoform 1 or isoform 4 (T+ forms) are expressed at equal levels with isoform 2 or isoform 3 (T- forms) in brain.

Functionally, unknown for isoform 4. Csen is involved in calcium-dependent transcriptional repression, regulation of potassium channels, and perhaps in processing of PSEN2 and apoptosis. The protein is Calsenilin isoform 4 (Kcnip3) of Mus musculus (Mouse).